Here is a 580-residue protein sequence, read N- to C-terminus: Small conductance calcium-activated potassium channel protein 2 (580 aa).

Disordered regions lie at residues 1–68 (MSSC…VSKP) and 88–116 (GGGG…KKNQ). Positions 48 to 61 (SSPSAAAAASSSAP) are enriched in low complexity. A compositionally biased stretch (gly residues) spans 88-104 (GGGGGGGGGGGGSGHGS). The helical transmembrane segment at 140–160 (LIFGMFGIVVMVIETELSWGA) threads the bilayer. Residue Tyr161 is modified to Phosphotyrosine. Residues 169–189 (LALKCLISLSTIILLGLIIVY) form a helical membrane-spanning segment. Residues 215–235 (IFFICLEILVCAIHPIPGNYT) form a helical membrane-spanning segment. A helical transmembrane segment spans residues 257 to 277 (IILSIPMFLRLYLIARVMLLH). Residues 306-326 (LMTICPGTVLLVFSISLWIIA) form a helical membrane-spanning segment. The pore-forming intramembrane region spans 346–366 (FLGAMWLISITFLSIGYGDMV). Residues 375–395 (VCLLTGIMGAGCTALVVAVVA) traverse the membrane as a helical segment. The calmodulin-binding stretch occupies residues 413–489 (DTQLTKRVKN…LVDLAKTQNI (77 aa)). Residues 551 to 560 (HVTYNAERSR) show a composition bias toward basic and acidic residues. Residues 551–580 (HVTYNAERSRSSSRRRRSSSTAPPTSSESS) are disordered. A compositionally biased stretch (low complexity) spans 569–580 (SSTAPPTSSESS).

This sequence belongs to the potassium channel KCNN family. KCa2.2/KCNN2 subfamily. In terms of assembly, homodimer. Heteromultimer with KCNN1 and KCNN3. The complex is composed of 4 channel subunits each of which binds to a calmodulin subunit which regulates the channel activity through calcium-binding. Interacts (via N-terminal domain) with MPP2. As to expression, brain.

Its subcellular location is the membrane. It localises to the cytoplasm. It is found in the myofibril. The protein resides in the sarcomere. The protein localises to the z line. The enzyme catalyses K(+)(in) = K(+)(out). Inhibited by bee venom neurotoxin apamin. Inhibited by UCL 1684 and tetraethylammonium (TEA). Small conductance calcium-activated potassium channel that mediates the voltage-independent transmembrane transfer of potassium across the cell membrane through a constitutive interaction with calmodulin which binds the intracellular calcium allowing its opening. The current is characterized by a voltage-independent activation, an intracellular calcium concentration increase-dependent activation and a single-channel conductance of about 3 picosiemens. Also presents an inwardly rectifying current, thus reducing its already small outward conductance of potassium ions, which is particularly the case when the membrane potential displays positive values, above + 20 mV. The inward rectification could be due to a blockade of the outward current by intracellular divalent cations such as calcium and magnesium and could also be due to an intrinsic property of the channel pore, independent of intracellular divalent ions. There are three positively charged amino acids in the S6 transmembrane domain, close to the pore, that collectively control the conductance and rectification through an electrostatic mechanism. Additionally, electrostatic contributions from these residues also play an important role in determining the intrinsic open probability of the channel in the absence of calcium, affecting the apparent calcium affinity for activation. Forms an heteromeric complex with calmodulin, which is constitutively associated in a calcium-independent manner. Channel opening is triggered when calcium binds the calmodulin resulting in a rotary movement leading to the formation of the dimeric complex to open the gate. Plays a role in the repolarization phase of cardiac action potential. In Rattus norvegicus (Rat), this protein is Small conductance calcium-activated potassium channel protein 2.